Reading from the N-terminus, the 268-residue chain is uncharacterized protein (268 aa).

This sequence to M.tuberculosis Rv0025 and Rv0026.

This is an uncharacterized protein from Mycobacterium tuberculosis (strain CDC 1551 / Oshkosh).